Consider the following 66-residue polypeptide: UPF0337 protein spyM18_1212 (66 aa).

This sequence belongs to the UPF0337 (CsbD) family.

The chain is UPF0337 protein spyM18_1212 from Streptococcus pyogenes serotype M18 (strain MGAS8232).